A 360-amino-acid chain; its full sequence is Lipid-A-disaccharide synthase (360 aa).

This sequence belongs to the LpxB family.

The enzyme catalyses a lipid X + a UDP-2-N,3-O-bis[(3R)-3-hydroxyacyl]-alpha-D-glucosamine = a lipid A disaccharide + UDP + H(+). It functions in the pathway bacterial outer membrane biogenesis; LPS lipid A biosynthesis. Its function is as follows. Condensation of UDP-2,3-diacylglucosamine and 2,3-diacylglucosamine-1-phosphate to form lipid A disaccharide, a precursor of lipid A, a phosphorylated glycolipid that anchors the lipopolysaccharide to the outer membrane of the cell. This chain is Lipid-A-disaccharide synthase, found in Helicobacter pylori (strain HPAG1).